We begin with the raw amino-acid sequence, 629 residues long: DNA mismatch repair protein MutL (629 aa).

This sequence belongs to the DNA mismatch repair MutL/HexB family.

This protein is involved in the repair of mismatches in DNA. It is required for dam-dependent methyl-directed DNA mismatch repair. May act as a 'molecular matchmaker', a protein that promotes the formation of a stable complex between two or more DNA-binding proteins in an ATP-dependent manner without itself being part of a final effector complex. This chain is DNA mismatch repair protein MutL, found in Haemophilus influenzae (strain PittGG).